Consider the following 539-residue polypeptide: MRAVLLVCLLAGLAHADLFTAIADLQHMLGAEKDVTTIIDQYIEAERARLDDLRRYAHEYVHRNAHAESVGPEFVTNPINAYLLIKRLTTEWKKVENIMLNNKASTFLKNITDNRVRSEVKFPGEEDLSGAATALLRLQDTYSLDTLDLSNGIIGGEKVSNKLSGHDTFEVGRSAYNQKDYYHCLMWMQVALVKIENENPPTIEEWEILEYLAYSLYQQGNVRRALSLTKRLAKIAPNHPRAKGNVKWYEDMLQGKDMVGDLPPIVNKRVEYDGIVERDAYEALCRGEIPPVEPKWKNKLRCYLKRDKPFLKLAPIKVEILRFDPLAVLFKNVIHDSEIEVIKELASPKLKRATVQNSKTGELEHATYRISKSAWLKGDLDPVIDRVNRRIEDFTNLNQATSEELQVANYGLGGHYDPHFDFARKEEKNAFKTLNTGNRIATVLFYMSQPERGGATVFNHLGTAVFPSKNDALFWYNLRRDGEGDLRTRHAACPVLLGVKWVSNKWIHEKGQEFTRPCGLEEEVQENFIGDLSPYANDP.

Residues 1–16 (MRAVLLVCLLAGLAHA) form the signal peptide. Asn110 carries N-linked (GlcNAc...) asparagine glycosylation. A Fe2OG dioxygenase domain is found at 401-509 (TSEELQVANY…KWVSNKWIHE (109 aa)). Residues His419, Asp421, and His490 each coordinate Fe cation. Lys500 provides a ligand contact to 2-oxoglutarate.

The protein belongs to the P4HA family. As to quaternary structure, heterotetramer of two alpha chains and two beta chains. Exist either as a phy-2(2)/pdi-2(2) tetramer or as a phy-1/phy-2/pdi-2(2) tetramer. Requires Fe(2+) as cofactor. L-ascorbate is required as a cofactor.

It is found in the endoplasmic reticulum lumen. The enzyme catalyses L-prolyl-[collagen] + 2-oxoglutarate + O2 = trans-4-hydroxy-L-prolyl-[collagen] + succinate + CO2. Catalyzes the post-translational formation of 4-hydroxyproline in -Xaa-Pro-Gly- sequences in collagens and other proteins. The sequence is that of Prolyl 4-hydroxylase subunit alpha-2 (phy-2) from Caenorhabditis elegans.